Reading from the N-terminus, the 192-residue chain is Imidazoleglycerol-phosphate dehydratase (192 aa).

The protein belongs to the imidazoleglycerol-phosphate dehydratase family.

Its subcellular location is the cytoplasm. The catalysed reaction is D-erythro-1-(imidazol-4-yl)glycerol 3-phosphate = 3-(imidazol-4-yl)-2-oxopropyl phosphate + H2O. It participates in amino-acid biosynthesis; L-histidine biosynthesis; L-histidine from 5-phospho-alpha-D-ribose 1-diphosphate: step 6/9. This chain is Imidazoleglycerol-phosphate dehydratase, found in Staphylococcus saprophyticus subsp. saprophyticus (strain ATCC 15305 / DSM 20229 / NCIMB 8711 / NCTC 7292 / S-41).